The sequence spans 85 residues: Putative N.vectensis toxin 1 9 (85 aa).

The N-terminal stretch at methionine 1–alanine 20 is a signal peptide. The propeptide occupies arginine 21 to serine 36. Disulfide bonds link cysteine 42–cysteine 82, cysteine 44–cysteine 72, and cysteine 65–cysteine 83.

This sequence belongs to the sea anemone sodium channel inhibitory toxin family. Type II subfamily. In terms of tissue distribution, expressed in ectodermal glands and in clumps outside of the extodermal layer. Is not expressed in nematocytes. In adult female tissues, shows similar expression levels in mesenteries (gametes-producing tissue), tentacles, pharynx and physa.

The protein resides in the secreted. Binds to site 3 of voltage-gated sodium channels and inhibits the inactivation process. Is highly active on DmNav1/TipE (drosophila) and is only extremely weakly active on rat Nav1.4-beta-1/SCN4A-SCN1B, and on human Nav1.5-beta-1/SCN5A-beta-1. This reveals high specificity for arthropod over mammalian channels. In vivo, when released into the medium, this recombinant toxin induces impaired swimming, paralysis and death of the crustacean A.nauplii within several hours. Also causes paralysis of cherry shrimps immediately after injection at very low doses. Its effect on zebrafish (D.rerio) larvae is also rapid, since it induces tail twitching accompanied by impaired swimming after 20 minutes and complete paralysis within 45 minutes. It has also been observed to cause death of zebrafish larvae within 1 hour. The chain is Putative N.vectensis toxin 1 9 from Nematostella vectensis (Starlet sea anemone).